A 64-amino-acid polypeptide reads, in one-letter code: Toxin BmKIT3 (64 aa).

Residues 1 to 61 (DGYIRGSNGC…TWKSESNTCG (61 aa)) enclose the LCN-type CS-alpha/beta domain. 4 disulfide bridges follow: cysteine 10-cysteine 60, cysteine 14-cysteine 35, cysteine 21-cysteine 42, and cysteine 25-cysteine 44. Cysteine 60 carries the post-translational modification Cysteine amide.

The protein belongs to the long (4 C-C) scorpion toxin superfamily. Sodium channel inhibitor family. Beta subfamily. As to expression, expressed by the venom gland.

The protein localises to the secreted. Depressant insect beta-toxins cause a transient contraction paralysis followed by a slow flaccid paralysis. They bind voltage-independently at site-4 of sodium channels (Nav) and shift the voltage of activation toward more negative potentials thereby affecting sodium channel activation and promoting spontaneous and repetitive firing. This chain is Toxin BmKIT3, found in Olivierus martensii (Manchurian scorpion).